We begin with the raw amino-acid sequence, 331 residues long: Lactamase-like protein nscB (331 aa).

Zn(2+)-binding residues include His-106, His-108, Asp-110, and His-111. The active-site Proton donor/acceptor is Asp-110.

This sequence belongs to the metallo-beta-lactamase superfamily. The cofactor is Zn(2+).

The protein operates within secondary metabolite biosynthesis. In terms of biological role, lactamase-like protein; part of the gene cluster that mediates the biosynthesis of neosartoricin B, a prenylated anthracenone that probably exhibits T-cell antiproliferative activity, suggestive of a physiological role as an immunosuppressive agent. The non-reducing polyketide synthase nscA probably synthesizes and cyclizes the decaketide backbone. The hydrolase nscB then mediates the product release through hydrolysis followed by spontaneous decarboxylation. The prenyltransferase nscD catalyzes the addition of the dimethylallyl group to the aromatic C5. The FAD-dependent monooxygenase nscC is then responsible for the stereospecific hydroxylation at C2. Neosartoricin B can be converted into two additional compounds neosartoricins C and D. Neosartoricin C is a spirocyclic compound that is cyclized through the attack of C3 hydroxyl on C14, followed by dehydration. On the other hand, neosartoricin D is a further cyclized compound in which attack of C2 on C14 in neosartoricin C results in the formation of the acetal-containing dioxabicyclo-octanone ring. Both of these compounds are novel and possibly represent related metabolites of the gene cluster. In Trichophyton equinum (strain ATCC MYA-4606 / CBS 127.97) (Horse ringworm fungus), this protein is Lactamase-like protein nscB.